We begin with the raw amino-acid sequence, 449 residues long: Tubulin alpha-2 chain (449 aa).

Q11 provides a ligand contact to GTP. An N6-acetyllysine modification is found at K40. Residues S140, G144, T145, T179, N206, and N228 each contribute to the GTP site. The active site involves E254.

It belongs to the tubulin family. Dimer of alpha and beta chains. A typical microtubule is a hollow water-filled tube with an outer diameter of 25 nm and an inner diameter of 15 nM. Alpha-beta heterodimers associate head-to-tail to form protofilaments running lengthwise along the microtubule wall with the beta-tubulin subunit facing the microtubule plus end conferring a structural polarity. Microtubules usually have 13 protofilaments but different protofilament numbers can be found in some organisms and specialized cells. Post-translationally, acetylation of alpha chains at Lys-40 stabilizes microtubules and affects affinity and processivity of microtubule motors. This modification has a role in multiple cellular functions, ranging from cell motility, cell cycle progression or cell differentiation to intracellular trafficking and signaling.

It is found in the cytoplasm. The protein localises to the cytoskeleton. It carries out the reaction GTP + H2O = GDP + phosphate + H(+). Tubulin is the major constituent of microtubules, a cylinder consisting of laterally associated linear protofilaments composed of alpha- and beta-tubulin heterodimers. Microtubules grow by the addition of GTP-tubulin dimers to the microtubule end, where a stabilizing cap forms. Below the cap, tubulin dimers are in GDP-bound state, owing to GTPase activity of alpha-tubulin. The sequence is that of Tubulin alpha-2 chain from Stylonychia lemnae (Ciliate).